The sequence spans 342 residues: Mitochondrial sorting homolog (342 aa).

Topologically, residues 1 to 6 (MTDRNE) are mitochondrial intermembrane. The helical transmembrane segment at 7-25 (LIGVAIRVVAAAAVSFLSV) threads the bilayer. The Cytoplasmic portion of the chain corresponds to 26–342 (RYLVKYLDPN…AHLLVEETLD (317 aa)). ATP is bound at residue 124–131 (GPPGCGKT).

The protein belongs to the AAA ATPase family.

It localises to the mitochondrion outer membrane. Its function is as follows. Involved in intramitochondrial sorting of proteins. The polypeptide is Mitochondrial sorting homolog (mspn-1) (Caenorhabditis elegans).